A 146-amino-acid chain; its full sequence is Large ribosomal subunit protein uL15 (146 aa).

The tract at residues 1 to 46 (MAIELHDLKPAPGAHKAKTRVGRGEGSKGKTAGRGTKGTGARKNVP) is disordered. The span at 29-43 (GKTAGRGTKGTGARK) shows a compositional bias: low complexity.

It belongs to the universal ribosomal protein uL15 family. Part of the 50S ribosomal subunit.

In terms of biological role, binds to the 23S rRNA. This is Large ribosomal subunit protein uL15 from Cutibacterium acnes (strain DSM 16379 / KPA171202) (Propionibacterium acnes).